The following is a 709-amino-acid chain: Nucleobase-ascorbate transporter 11 (709 aa).

2 disordered regions span residues Met1–Arg28 and Thr58–Gly167. Positions Lys15–Tyr25 are enriched in gly residues. The span at Ser65–Thr74 shows a compositional bias: polar residues. Basic and acidic residues-rich tracts occupy residues Lys75–Asp89, Asn108–Arg132, and Glu142–Glu151. Transmembrane regions (helical) follow at residues Tyr196 to Gly216, Ala222 to Phe242, Leu246 to Ser266, Ile288 to Leu308, Phe310 to Tyr330, Gly336 to Leu356, Ile369 to Gly389, Ile454 to Ala474, Leu532 to Leu552, Ile555 to Gly575, Ile590 to Tyr610, and Phe642 to Leu662.

It belongs to the nucleobase:cation symporter-2 (NCS2) (TC 2.A.40) family. Expressed in leaf primordia and vasculature of pedicels, rosette leaves, sepals, carpels and siliques. Expressed in the root central cylinder.

Its subcellular location is the membrane. The sequence is that of Nucleobase-ascorbate transporter 11 (NAT11) from Arabidopsis thaliana (Mouse-ear cress).